Reading from the N-terminus, the 278-residue chain is Para-Rep C1 (278 aa).

Residues 1-95 (MACSNWVFTR…VAGPWSYGDL (95 aa)) form the CRESS-DNA virus Rep endonuclease domain. Residues 8–11 (FTRN) carry the RCR-1 motif. Glu-33 and His-39 together coordinate a divalent metal cation. An RCR-2 motif is present at residues 39–41 (HIQ). A Nuclear localization signal motif is present at residues 48–69 (KKARFSTVKEIIGGNPHVEKMK). The active-site For DNA cleavage activity is Tyr-78. The RCR-3 signature appears at 78 to 81 (YVQK). Glu-83 lines the a divalent metal cation pocket. The Nuclear localization signal signature appears at 95 to 101 (LLKRGSH). ATP is bound at residue 176-178 (GKS).

This sequence belongs to the nanoviridea/circoviridae replication-associated protein family. Homooligomer (Potential). Rep binds to repeated DNA motifs (iterons). The cofactor is Mg(2+). Mn(2+) is required as a cofactor.

It is found in the host nucleus. The catalysed reaction is ATP + H2O = ADP + phosphate + H(+). In terms of biological role, initiates and terminates the replication only of its own subviral DNA molecule. The closed circular ssDNA genome is first converted to a superhelical dsDNA. Rep binds a specific hairpin at the genome origin of replication. Introduces an endonucleolytic nick within the intergenic region of the genome, thereby initiating the rolling circle replication (RCR). Following cleavage, binds covalently to the 5'-phosphate of DNA as a tyrosyl ester. The cleavage gives rise to a free 3'-OH that serves as a primer for the cellular DNA polymerase. The polymerase synthesizes the (+) strand DNA by rolling circle mechanism. After one round of replication, a Rep-catalyzed nucleotidyl transfer reaction releases a circular single-stranded virus genome, thereby terminating the replication. Displays origin-specific DNA cleavage, nucleotidyl transferase, ATPase and helicase activities. The sequence is that of Para-Rep C1 (C1) from Faba bean necrotic yellows C1 alphasatellite (FBNYC1A).